The chain runs to 416 residues: D-amino acid dehydrogenase 2 (416 aa).

5 to 19 (VCIIGAGVVGLATAY) is an FAD binding site.

Belongs to the DadA oxidoreductase family. Requires FAD as cofactor.

The enzyme catalyses a D-alpha-amino acid + A + H2O = a 2-oxocarboxylate + AH2 + NH4(+). Oxidative deamination of D-amino acids. The protein is D-amino acid dehydrogenase 2 (dadA2) of Pseudomonas aeruginosa (strain ATCC 15692 / DSM 22644 / CIP 104116 / JCM 14847 / LMG 12228 / 1C / PRS 101 / PAO1).